The primary structure comprises 500 residues: Endonuclease domain-containing 1 protein (500 aa).

Positions Met-1 to Gly-21 are cleaved as a signal peptide. The segment at Glu-293 to Gly-323 is disordered. The segment covering Gln-297–Pro-317 has biased composition (low complexity). Lys-407 is subject to N6-acetyllysine.

Belongs to the DNA/RNA non-specific endonuclease family. In terms of assembly, interacts with RNF26; this interaction is important to modulate innate immune signaling through the cGAS-STING pathway.

It localises to the secreted. Its function is as follows. May act as a DNase and a RNase. Plays a role in the modulation of innate immune signaling through the cGAS-STING pathway by interacting with RNF26. This chain is Endonuclease domain-containing 1 protein (ENDOD1), found in Homo sapiens (Human).